The chain runs to 100 residues: Protein alpha-2 (100 aa).

This is Protein alpha-2 from Bos taurus (Bovine).